A 36-amino-acid chain; its full sequence is Pancreatic polypeptide (36 aa).

Y36 is subject to Tyrosine amide.

The protein belongs to the NPY family.

The protein resides in the secreted. Hormone secreted by pancreatic cells that acts as a regulator of pancreatic and gastrointestinal functions. The protein is Pancreatic polypeptide (PPY) of Struthio camelus (Common ostrich).